A 258-amino-acid polypeptide reads, in one-letter code: Probable splicing factor, arginine/serine-rich 3 (258 aa).

An RRM 1 domain is found at 9–83; sequence QKVYVGNLPG…RRIRVEFTRG (75 aa). 2 disordered regions span residues 81 to 120 and 190 to 258; these read TRGV…PQRR and AYIR…PSPQ. A compositionally biased stretch (basic and acidic residues) spans 97-107; it reads GGDHRGGDFRG. Positions 108–117 are enriched in gly residues; sequence GRGGGRGGGP. Positions 123-197 constitute an RRM 2 domain; sequence YRVIVEGLPP…ETAYIRVRED (75 aa). Over residues 208 to 223 the composition is skewed to basic and acidic residues; it reads GRDRSRSRSPRAERRA. The span at 228–246 shows a compositional bias: basic residues; that stretch reads SPRRSRSRSRSRSRSRSRS. Residues 247 to 258 show a composition bias toward low complexity; the sequence is ASRSPSRSPSPQ.

This sequence belongs to the splicing factor SR family. Interacts with spk-1. Post-translationally, directly phosphorylated by spk-1 in vitro on serine residues of the RS domain. In terms of tissue distribution, predominantly coexpressed with spk-1 in adult hermaphrodite germlines.

The protein localises to the nucleus. Functionally, plays an essential role in embryogenesis. The sequence is that of Probable splicing factor, arginine/serine-rich 3 (rsp-3) from Caenorhabditis elegans.